The following is a 250-amino-acid chain: MSFIAIIPARYASTRLPGKPLADIAGKPMVVHVMERALASGADRVIVATDHPDVVKAVEAAGGEVCLTRADHQSGTERLAEVIEHYGFADDDIIVNVQGDEPLVPPVIIRQVADNLAACSAGMATLAVPIASSEEAFNPNAVKVVMDAQGYALYFSRATIPWERERFAQSKETIGDCFLRHIGIYAYRAGFIRRYVNWAPSQLEQIELLEQLRVLWYGEKIHVAVAKAVPAVGVDTQSDLDRVRAIMLNQ.

It belongs to the KdsB family.

The protein resides in the cytoplasm. The catalysed reaction is 3-deoxy-alpha-D-manno-oct-2-ulosonate + CTP = CMP-3-deoxy-beta-D-manno-octulosonate + diphosphate. Its pathway is nucleotide-sugar biosynthesis; CMP-3-deoxy-D-manno-octulosonate biosynthesis; CMP-3-deoxy-D-manno-octulosonate from 3-deoxy-D-manno-octulosonate and CTP: step 1/1. It participates in bacterial outer membrane biogenesis; lipopolysaccharide biosynthesis. In terms of biological role, activates KDO (a required 8-carbon sugar) for incorporation into bacterial lipopolysaccharide in Gram-negative bacteria. The protein is 3-deoxy-manno-octulosonate cytidylyltransferase of Yersinia pseudotuberculosis serotype O:1b (strain IP 31758).